A 236-amino-acid chain; its full sequence is Eukaryotic translation initiation factor 3 subunit J (236 aa).

The interval Met1–Ala65 is disordered. Residues Gly28–Lys46 show a composition bias toward acidic residues. The span at Asp47–Ala58 shows a compositional bias: basic and acidic residues.

It belongs to the eIF-3 subunit J family. As to quaternary structure, component of the eukaryotic translation initiation factor 3 (eIF-3) complex. The eIF-3 complex interacts with pix.

It is found in the cytoplasm. Functionally, component of the eukaryotic translation initiation factor 3 (eIF-3) complex, which is involved in protein synthesis of a specialized repertoire of mRNAs and, together with other initiation factors, stimulates binding of mRNA and methionyl-tRNAi to the 40S ribosome. The eIF-3 complex specifically targets and initiates translation of a subset of mRNAs involved in cell proliferation. This chain is Eukaryotic translation initiation factor 3 subunit J, found in Drosophila melanogaster (Fruit fly).